Reading from the N-terminus, the 225-residue chain is Glycerol-3-phosphate acyltransferase (225 aa).

6 helical membrane-spanning segments follow: residues 6–26, 55–75, 95–115, 135–155, 160–180, and 187–207; these read FFFF…LIIG, WGIV…IICL, DIAI…SIFN, PFIG…VGYA, IMAT…PGIT, and ILYF…HSNI.

Belongs to the PlsY family. In terms of assembly, probably interacts with PlsX.

It is found in the cell membrane. It catalyses the reaction an acyl phosphate + sn-glycerol 3-phosphate = a 1-acyl-sn-glycero-3-phosphate + phosphate. It participates in lipid metabolism; phospholipid metabolism. Functionally, catalyzes the transfer of an acyl group from acyl-phosphate (acyl-PO(4)) to glycerol-3-phosphate (G3P) to form lysophosphatidic acid (LPA). This enzyme utilizes acyl-phosphate as fatty acyl donor, but not acyl-CoA or acyl-ACP. The chain is Glycerol-3-phosphate acyltransferase from Phytoplasma australiense.